The primary structure comprises 347 residues: Haptoglobin (347 aa).

The first 18 residues, 1–18 (MRALGAVITLLLWGQLFA), serve as a signal peptide directing secretion. The Sushi domain occupies 31–88 (DSCPKPPEIANGYVEHLVRYQCKNYYRLRTEGDGVYALNSEKQWVNKAVGEQLPECEA). Cystine bridges form between Cys52/Cys86 and Cys90/Cys207. A Peptidase S1 domain is found at 103–345 (IIGGSLDAKG…ILDWIQKTIA (243 aa)). N-linked (GlcNAc...) asparagine glycosylation is found at Asn148, Asn152, Asn182, Asn230, and Asn256. Cystine bridges form between Cys250–Cys281 and Cys292–Cys322. The interval 259 to 264 (VPENKI) is interaction with CD163.

Belongs to the peptidase S1 family. Tetramer of two alpha and two beta chains; disulfide-linked. The hemoglobin/haptoglobin complex is composed of a haptoglobin dimer bound to two hemoglobin alpha-beta dimers. Interacts with CD163. Interacts with ERGIC3. In terms of tissue distribution, expressed by the liver and secreted in plasma.

Its subcellular location is the secreted. Functionally, as a result of hemolysis, hemoglobin is found to accumulate in the kidney and is secreted in the urine. Haptoglobin captures, and combines with free plasma hemoglobin to allow hepatic recycling of heme iron and to prevent kidney damage. Haptoglobin also acts as an antioxidant, has antibacterial activity and plays a role in modulating many aspects of the acute phase response. Hemoglobin/haptoglobin complexes are rapidly cleared by the macrophage CD163 scavenger receptor expressed on the surface of liver Kupfer cells through an endocytic lysosomal degradation pathway. This is Haptoglobin (HP) from Oryctolagus cuniculus (Rabbit).